The sequence spans 296 residues: 4-hydroxy-tetrahydrodipicolinate synthase (296 aa).

Residue threonine 47 coordinates pyruvate. Catalysis depends on tyrosine 135, which acts as the Proton donor/acceptor. The active-site Schiff-base intermediate with substrate is the lysine 164. Position 207 (isoleucine 207) interacts with pyruvate.

The protein belongs to the DapA family. As to quaternary structure, homotetramer; dimer of dimers.

Its subcellular location is the cytoplasm. The enzyme catalyses L-aspartate 4-semialdehyde + pyruvate = (2S,4S)-4-hydroxy-2,3,4,5-tetrahydrodipicolinate + H2O + H(+). The protein operates within amino-acid biosynthesis; L-lysine biosynthesis via DAP pathway; (S)-tetrahydrodipicolinate from L-aspartate: step 3/4. Its function is as follows. Catalyzes the condensation of (S)-aspartate-beta-semialdehyde [(S)-ASA] and pyruvate to 4-hydroxy-tetrahydrodipicolinate (HTPA). The chain is 4-hydroxy-tetrahydrodipicolinate synthase from Karelsulcia muelleri (strain GWSS) (Sulcia muelleri).